Reading from the N-terminus, the 605-residue chain is Glucose-6-phosphate isomerase (605 aa).

Glu-410 (proton donor) is an active-site residue. Active-site residues include His-441 and Lys-569.

This sequence belongs to the GPI family.

It is found in the cytoplasm. It catalyses the reaction alpha-D-glucose 6-phosphate = beta-D-fructose 6-phosphate. Its pathway is carbohydrate degradation; glycolysis; D-glyceraldehyde 3-phosphate and glycerone phosphate from D-glucose: step 2/4. The chain is Glucose-6-phosphate isomerase (PGI) from Leishmania mexicana.